The primary structure comprises 349 residues: 5-deoxyribose 1-phosphate isomerase (349 aa).

Residues 49–51 (RGA), R92, and Q199 each bind substrate. D240 functions as the Proton donor in the catalytic mechanism. Residue 250-251 (NK) coordinates substrate.

This sequence belongs to the EIF-2B alpha/beta/delta subunits family. DrdI subfamily.

The catalysed reaction is 5-deoxy-alpha-D-ribose 1-phosphate = 5-deoxy-D-ribulose 1-phosphate. It functions in the pathway carbohydrate degradation. Its function is as follows. Catalyzes the isomerization of 5-deoxy-alpha-D-ribose 1-phosphate to 5-deoxy-D-ribulose 1-phosphate, as part of a 5-deoxyribose salvage pathway that recycles this toxic radical SAM enzyme by-product to mainstream metabolites. The polypeptide is 5-deoxyribose 1-phosphate isomerase (Clostridium botulinum (strain Okra / Type B1)).